The primary structure comprises 914 residues: Beta-mannosidase A (914 aa).

The first 20 residues, 1–20 (MRFTATAAALVASSIPATLG), serve as a signal peptide directing secretion. Asn39, Asn79, Asn230, Asn265, Asn299, Asn309, and Asn330 each carry an N-linked (GlcNAc...) asparagine glycan. Catalysis depends on Glu462, which acts as the Proton donor. 8 N-linked (GlcNAc...) asparagine glycosylation sites follow: Asn591, Asn614, Asn641, Asn721, Asn744, Asn773, Asn784, and Asn909.

The protein belongs to the glycosyl hydrolase 2 family. Beta-mannosidase A subfamily. In terms of assembly, homodimer.

Its subcellular location is the secreted. The catalysed reaction is Hydrolysis of terminal, non-reducing beta-D-mannose residues in beta-D-mannosides.. The protein operates within glycan metabolism; N-glycan degradation. In terms of biological role, exoglycosidase that cleaves the single beta-linked mannose residue from the non-reducing end of beta-mannosidic oligosaccharides of various complexity and length. Involved in the degradation of polymeric mannan and galactomannan. The chain is Beta-mannosidase A (mndA) from Aspergillus oryzae (strain ATCC 42149 / RIB 40) (Yellow koji mold).